We begin with the raw amino-acid sequence, 594 residues long: Protein FAM200C (594 aa).

This Bos taurus (Bovine) protein is Protein FAM200C (FAM200C).